We begin with the raw amino-acid sequence, 1048 residues long: Platelet-derived growth factor receptor beta (1048 aa).

The first 30 residues, 1–30 (MLRASAMRAAVLHLTVALAALLSSCTTVSC), serve as a signal peptide directing secretion. The Extracellular portion of the chain corresponds to 31–528 (LKIVPEEKQL…LVSSSLFSQV (498 aa)). Residues 35 to 124 (PEEKQLILAE…EIKEVAVFVP (90 aa)) form the Ig-like C2-type 1 domain. 2 cysteine pairs are disulfide-bonded: Cys52-Cys108 and Cys153-Cys194. Residues Asn87, Asn159, Asn224, and Asn239 are each glycosylated (N-linked (GlcNAc...) asparagine). Ig-like C2-type domains lie at 216–309 (PEDI…ASVN) and 319–406 (AVKS…KEVT). Cys240 and Cys293 form a disulfide bridge. N-linked (GlcNAc...) asparagine glycans are attached at residues Asn309, Asn327, and Asn457. A disulfide bond links Cys434 and Cys503. The helical transmembrane segment at 529 to 549 (VLLAVVLTLVPIIIMSIIILI) threads the bilayer. Residues 550–1048 (AVWKKKPRYE…PIPDPKPEKS (499 aa)) are Cytoplasmic-facing. Phosphotyrosine; by autocatalysis is present on residues Tyr558, Tyr575, and Tyr577. A Protein kinase domain is found at 596-957 (LVLGRTLGSG…FLVHCVGDML (362 aa)). ATP-binding positions include 602-610 (LGSGAFGRV) and Lys630. 5 positions are modified to phosphotyrosine; by autocatalysis: Tyr735, Tyr746, Tyr758, Tyr766, and Tyr770. Asp821 (proton acceptor) is an active-site residue. Phosphotyrosine; by autocatalysis occurs at positions 852 and 1036.

The protein belongs to the protein kinase superfamily. Tyr protein kinase family. CSF-1/PDGF receptor subfamily. As to quaternary structure, interacts with homodimeric PDGFB and PDGFD, and with heterodimers formed by PDGFA and PDGFB. Monomer in the absence of bound ligand. Interaction with homodimeric PDGFB, heterodimers formed by PDGFA and PDGFB or homodimeric PDGFD, leads to receptor dimerization, where both PDGFRA homodimers and heterodimers with PDGFRB are observed. In terms of processing, ubiquitinated. After autophosphorylation, the receptor is polyubiquitinated, leading to its degradation. Autophosphorylated on tyrosine residues upon ligand binding. Autophosphorylation occurs in trans, i.e. one subunit of the dimeric receptor phosphorylates tyrosine residues on the other subunit.

The protein resides in the cell membrane. Its subcellular location is the cytoplasmic vesicle. It is found in the lysosome lumen. It catalyses the reaction L-tyrosyl-[protein] + ATP = O-phospho-L-tyrosyl-[protein] + ADP + H(+). Its activity is regulated as follows. Present in an inactive conformation in the absence of bound ligand. Binding of PDGFB and/or PDGFD leads to dimerization and activation by autophosphorylation on tyrosine residues. In terms of biological role, tyrosine-protein kinase that acts as a cell-surface receptor for homodimeric PDGFB and PDGFD and for heterodimers formed by PDGFA and PDGFB, and plays an essential role in the regulation of embryonic development, cell proliferation, survival, differentiation, chemotaxis and migration. Plays an essential role in blood vessel development by promoting proliferation, migration and recruitment of pericytes and smooth muscle cells to endothelial cells. Required for normal development of the cardiovascular system. Required for normal recruitment of pericytes (mesangial cells) in the kidney glomerulus, and for normal formation of a branched network of capillaries in kidney glomeruli. Promotes rearrangement of the actin cytoskeleton and the formation of membrane ruffles. Binding of its cognate ligands - homodimeric PDGFB, heterodimers formed by PDGFA and PDGFB or homodimeric PDGFD -leads to the activation of several signaling cascades; the response depends on the nature of the bound ligand and is modulated by the formation of heterodimers between PDGFRA and PDGFRB. Receptor signaling is down-regulated by protein phosphatases that dephosphorylate the receptor and its down-stream effectors, and by rapid internalization of the activated receptor. This is Platelet-derived growth factor receptor beta (pdgfrb) from Takifugu rubripes (Japanese pufferfish).